Consider the following 485-residue polypeptide: NADH-quinone oxidoreductase subunit N (485 aa).

The next 14 membrane-spanning stretches (helical) occupy residues 8-28, 35-55, 71-91, 105-125, 127-147, 159-179, 203-223, 235-255, 271-291, 297-317, 326-346, 373-393, 408-430, and 455-475; these read LIAL…MLSI, FLNA…LWFV, GFAM…CTFA, FYLL…ANHL, SLFL…GYAF, YTIL…LVYA, LLAG…LVPF, PAPV…GVVM, VVLA…ALSQ, LLGY…IALQ, VGVY…VVSL, AAVM…LGFI, WWLV…RVAV, and IVVL…QPLI.

This sequence belongs to the complex I subunit 2 family. NDH-1 is composed of 13 different subunits. Subunits NuoA, H, J, K, L, M, N constitute the membrane sector of the complex.

Its subcellular location is the cell inner membrane. It carries out the reaction a quinone + NADH + 5 H(+)(in) = a quinol + NAD(+) + 4 H(+)(out). In terms of biological role, NDH-1 shuttles electrons from NADH, via FMN and iron-sulfur (Fe-S) centers, to quinones in the respiratory chain. The immediate electron acceptor for the enzyme in this species is believed to be ubiquinone. Couples the redox reaction to proton translocation (for every two electrons transferred, four hydrogen ions are translocated across the cytoplasmic membrane), and thus conserves the redox energy in a proton gradient. The chain is NADH-quinone oxidoreductase subunit N from Escherichia coli (strain ATCC 8739 / DSM 1576 / NBRC 3972 / NCIMB 8545 / WDCM 00012 / Crooks).